Reading from the N-terminus, the 428-residue chain is Adenosylmethionine-8-amino-7-oxononanoate aminotransferase (428 aa).

Tryptophan 52 contacts substrate. Pyridoxal 5'-phosphate is bound at residue 112–113 (GS). A substrate-binding site is contributed by tyrosine 144. Aspartate 245 provides a ligand contact to pyridoxal 5'-phosphate. Residues lysine 274 and glycine 307 each coordinate substrate. At lysine 274 the chain carries N6-(pyridoxal phosphate)lysine. 308–309 (PT) provides a ligand contact to pyridoxal 5'-phosphate. Arginine 391 contacts substrate.

Belongs to the class-III pyridoxal-phosphate-dependent aminotransferase family. BioA subfamily. In terms of assembly, homodimer. It depends on pyridoxal 5'-phosphate as a cofactor.

Its subcellular location is the cytoplasm. It carries out the reaction (8S)-8-amino-7-oxononanoate + S-adenosyl-L-methionine = S-adenosyl-4-methylsulfanyl-2-oxobutanoate + (7R,8S)-7,8-diammoniononanoate. The protein operates within cofactor biosynthesis; biotin biosynthesis; 7,8-diaminononanoate from 8-amino-7-oxononanoate (SAM route): step 1/1. Its function is as follows. Catalyzes the transfer of the alpha-amino group from S-adenosyl-L-methionine (SAM) to 7-keto-8-aminopelargonic acid (KAPA) to form 7,8-diaminopelargonic acid (DAPA). It is the only aminotransferase known to utilize SAM as an amino donor. In Buchnera aphidicola subsp. Acyrthosiphon pisum (strain APS) (Acyrthosiphon pisum symbiotic bacterium), this protein is Adenosylmethionine-8-amino-7-oxononanoate aminotransferase.